A 308-amino-acid chain; its full sequence is Glycine--tRNA ligase alpha subunit (308 aa).

The protein belongs to the class-II aminoacyl-tRNA synthetase family. Tetramer of two alpha and two beta subunits.

The protein localises to the cytoplasm. The catalysed reaction is tRNA(Gly) + glycine + ATP = glycyl-tRNA(Gly) + AMP + diphosphate. This is Glycine--tRNA ligase alpha subunit from Brucella canis (strain ATCC 23365 / NCTC 10854 / RM-666).